A 336-amino-acid polypeptide reads, in one-letter code: Cytosolic Fe-S cluster assembly factor NBP35 (336 aa).

Positions 1–20 (MIATQRPFPIPSPVPLAPSS) are disordered. Residues Cys-35, Cys-49, Cys-52, and Cys-58 each contribute to the [4Fe-4S] cluster site. Position 88–95 (88–95 (GKGGVGKS)) interacts with ATP. The [4Fe-4S] cluster site is built by Cys-261 and Cys-264.

The protein belongs to the Mrp/NBP35 ATP-binding proteins family. NUBP1/NBP35 subfamily. Heterotetramer of 2 NBP35 and 2 CFD1 chains. It depends on [4Fe-4S] cluster as a cofactor.

The protein localises to the cytoplasm. Component of the cytosolic iron-sulfur (Fe/S) protein assembly (CIA) machinery. Required for maturation of extramitochondrial Fe-S proteins. The NBP35-CFD1 heterotetramer forms a Fe-S scaffold complex, mediating the de novo assembly of an Fe-S cluster and its transfer to target apoproteins. This is Cytosolic Fe-S cluster assembly factor NBP35 from Cryptococcus neoformans var. neoformans serotype D (strain B-3501A) (Filobasidiella neoformans).